A 226-amino-acid chain; its full sequence is Small ribosomal subunit protein uS3 (226 aa).

The 69-residue stretch at I36–K104 folds into the KH type-2 domain.

The protein belongs to the universal ribosomal protein uS3 family. In terms of assembly, part of the 30S ribosomal subunit. Forms a tight complex with proteins S10 and S14.

Binds the lower part of the 30S subunit head. Binds mRNA in the 70S ribosome, positioning it for translation. This chain is Small ribosomal subunit protein uS3, found in Karelsulcia muelleri (strain GWSS) (Sulcia muelleri).